We begin with the raw amino-acid sequence, 345 residues long: Anthranilate phosphoribosyltransferase (345 aa).

Residues glycine 88, 91–92 (GD), threonine 96, 98–101 (NIST), 116–124 (KHGNRSASG), and serine 128 contribute to the 5-phospho-alpha-D-ribose 1-diphosphate site. Residue glycine 88 participates in anthranilate binding. Residue serine 100 participates in Mg(2+) binding. Residue asparagine 119 coordinates anthranilate. Arginine 174 serves as a coordination point for anthranilate. Residues aspartate 233 and glutamate 234 each contribute to the Mg(2+) site.

It belongs to the anthranilate phosphoribosyltransferase family. In terms of assembly, homodimer. It depends on Mg(2+) as a cofactor.

It catalyses the reaction N-(5-phospho-beta-D-ribosyl)anthranilate + diphosphate = 5-phospho-alpha-D-ribose 1-diphosphate + anthranilate. It functions in the pathway amino-acid biosynthesis; L-tryptophan biosynthesis; L-tryptophan from chorismate: step 2/5. In terms of biological role, catalyzes the transfer of the phosphoribosyl group of 5-phosphorylribose-1-pyrophosphate (PRPP) to anthranilate to yield N-(5'-phosphoribosyl)-anthranilate (PRA). This Prochlorococcus marinus (strain NATL1A) protein is Anthranilate phosphoribosyltransferase.